We begin with the raw amino-acid sequence, 1356 residues long: DNA-directed RNA polymerase subunit beta (1356 aa).

Belongs to the RNA polymerase beta chain family. As to quaternary structure, the RNAP catalytic core consists of 2 alpha, 1 beta, 1 beta' and 1 omega subunit. When a sigma factor is associated with the core the holoenzyme is formed, which can initiate transcription.

The catalysed reaction is RNA(n) + a ribonucleoside 5'-triphosphate = RNA(n+1) + diphosphate. In terms of biological role, DNA-dependent RNA polymerase catalyzes the transcription of DNA into RNA using the four ribonucleoside triphosphates as substrates. This is DNA-directed RNA polymerase subunit beta from Phenylobacterium zucineum (strain HLK1).